A 448-amino-acid polypeptide reads, in one-letter code: Glutamyl-tRNA reductase (448 aa).

Residues 49-52 (TCNR), Ser-109, 114-116 (ETQ), and Gln-120 each bind substrate. Residue Cys-50 is the Nucleophile of the active site. 189–194 (GAGEMG) serves as a coordination point for NADP(+).

The protein belongs to the glutamyl-tRNA reductase family. Homodimer.

The catalysed reaction is (S)-4-amino-5-oxopentanoate + tRNA(Glu) + NADP(+) = L-glutamyl-tRNA(Glu) + NADPH + H(+). It functions in the pathway porphyrin-containing compound metabolism; protoporphyrin-IX biosynthesis; 5-aminolevulinate from L-glutamyl-tRNA(Glu): step 1/2. Catalyzes the NADPH-dependent reduction of glutamyl-tRNA(Glu) to glutamate 1-semialdehyde (GSA). This Staphylococcus epidermidis (strain ATCC 35984 / DSM 28319 / BCRC 17069 / CCUG 31568 / BM 3577 / RP62A) protein is Glutamyl-tRNA reductase.